A 2159-amino-acid polypeptide reads, in one-letter code: ATP-binding cassette sub-family A member 7 (2159 aa).

A helical transmembrane segment spans residues 22–42 (PIQLLVELLWPLFLFFILVAV). The Extracellular segment spans residues 43 to 546 (RHSHPPLEHH…DVFLRVLSRS (504 aa)). Cysteines 75 and 222 form a disulfide. N-linked (GlcNAc...) asparagine glycosylation occurs at N309. Helical transmembrane passes span 547–567 (LPLF…KAVV), 590–610 (LGWF…LVLV), 623–643 (VVIF…SFLL), 652–672 (LAAA…VLCV), 678–698 (LHLG…GFGC), and 732–752 (AFLL…EAVC). One can recognise an ABC transporter 1 domain in the interval 804 to 1035 (VSIRGLKKHF…LGCGYYLTLV (232 aa)). 838 to 845 (GHNGAGKT) is an ATP binding site. Residues 846 to 866 (TTLSILSGLFPPSSGSASILG) form a helical membrane-spanning segment. 2 disordered regions span residues 1042-1088 (VTHD…GAVP) and 1172-1192 (GGDS…PTGP). Basic and acidic residues predominate over residues 1044-1061 (HDAKGDSEDPRREKKSDG). Residues 1062–1081 (NGRTSDTAFTRGTSDKSNQA) show a composition bias toward polar residues. The chain crosses the membrane as a helical span at residues 1246-1266 (VVLPALFVGLALFFSLIVPPF). The Extracellular portion of the chain corresponds to 1267-1551 (GQYPPLQLSP…TLIASSVDVL (285 aa)). A disulfide bridge links C1359 with C1373. The next 5 membrane-spanning stretches (helical) occupy residues 1552 to 1572 (VSIC…LVLI), 1598 to 1618 (FLWD…IFLA), 1635 to 1655 (LLLL…SFFF), 1663 to 1683 (VVLT…TFVL), and 1743 to 1763 (IIGK…LITL). One can recognise an ABC transporter 2 domain in the interval 1807 to 2039 (LVLRDLTKVY…FGAGHTLTLR (233 aa)). 1841-1848 (GVNGAGKT) provides a ligand contact to ATP. Residues 2118–2159 (QGEEEESSRQEAEEEEVSKPGRQHPKRVSRFLEDPSSVETMI) are disordered. A compositionally biased stretch (acidic residues) spans 2119-2133 (GEEEESSRQEAEEEE).

The protein belongs to the ABC transporter superfamily. ABCA family. In terms of processing, N-glycosylated. Widely expressed with higher expression in brain, lung, adrenal gland, spleen and hematopoietic tissues (at protein level). In the brain, expressed in cortex, cerebellum, hippocampus, olfactory bulb, neurons, astrocytes and microglia (at protein level). Also expressed in adipocytes and macrophages (at protein level). Expressed in thymocytes (at protein level). Highly expressed in spleen and hematopoietic tissues. Expressed in brain, lung, macrophages, microglia, oligodendrocytes and neurons.

The protein localises to the cell membrane. Its subcellular location is the golgi apparatus membrane. The protein resides in the early endosome membrane. It localises to the cytoplasm. It is found in the cell projection. The protein localises to the ruffle membrane. Its subcellular location is the phagocytic cup. Probable ATP-binding cassette (ABC) transporter that plays a role in lipid homeostasis and macrophage-mediated phagocytosis. Binds APOA1 and may function in apolipoprotein-mediated phospholipid efflux from cells. May also mediate cholesterol efflux. May regulate cellular ceramide homeostasis during keratinocyte differentiation. Involved in lipid raft organization and CD1D localization on thymocytes and antigen-presenting cells, which plays an important role in natural killer T-cell development and activation. Plays a role in phagocytosis of apoptotic cells by macrophages. Macrophage phagocytosis is stimulated by APOA1 or APOA2, probably by stabilization of ABCA7. Also involved in phagocytic clearance of amyloid-beta by microglia cells and macrophages. Further limits amyloid-beta production by playing a role in the regulation of amyloid-beta A4 precursor protein (APP) endocytosis and/or processing. This is ATP-binding cassette sub-family A member 7 (Abca7) from Mus musculus (Mouse).